Reading from the N-terminus, the 203-residue chain is GTP cyclohydrolase-2 (203 aa).

49–53 (RIHSE) contributes to the GTP binding site. Residues Cys-54, Cys-65, and Cys-67 each contribute to the Zn(2+) site. Residues Gln-70, 92 to 94 (EGR), and Thr-114 contribute to the GTP site. Asp-126 (proton acceptor) is an active-site residue. Arg-128 acts as the Nucleophile in catalysis. GTP-binding residues include Thr-149 and Lys-154.

This sequence belongs to the GTP cyclohydrolase II family. Requires Zn(2+) as cofactor.

It carries out the reaction GTP + 4 H2O = 2,5-diamino-6-hydroxy-4-(5-phosphoribosylamino)-pyrimidine + formate + 2 phosphate + 3 H(+). The protein operates within cofactor biosynthesis; riboflavin biosynthesis; 5-amino-6-(D-ribitylamino)uracil from GTP: step 1/4. In terms of biological role, catalyzes the conversion of GTP to 2,5-diamino-6-ribosylamino-4(3H)-pyrimidinone 5'-phosphate (DARP), formate and pyrophosphate. The polypeptide is GTP cyclohydrolase-2 (Shewanella sp. (strain W3-18-1)).